The following is a 99-amino-acid chain: Keratinocyte differentiation-associated protein (99 aa).

A signal peptide spans 1–22; the sequence is MKIPVLPAVVLLSLLVLHSAQG.

As to expression, highly expressed in skin and detected at lower levels in thymus. In skin, found exclusively in lamellar granules of granular keratinocytes and in the intracellular space of the stratum corneum. Also highly expressed in oral mucosa, tongue, esophagus, and stomach, and at much lower levels in bladder and uterus. Not detected in gastrointestinal mucosa.

The protein resides in the secreted. In terms of biological role, may act as a soluble regulator of keratinocyte differentiation. May play an important role in embryonic skin morphogenesis. The sequence is that of Keratinocyte differentiation-associated protein (KRTDAP) from Homo sapiens (Human).